The sequence spans 202 residues: Pyridoxal 5'-phosphate synthase subunit PdxT (202 aa).

52–54 (GES) is a binding site for L-glutamine. The active-site Nucleophile is cysteine 84. L-glutamine contacts are provided by residues arginine 120 and 148-149 (IR). Residues histidine 185 and glutamate 187 each act as charge relay system in the active site.

It belongs to the glutaminase PdxT/SNO family. As to quaternary structure, in the presence of PdxS, forms a dodecamer of heterodimers. Only shows activity in the heterodimer.

The catalysed reaction is aldehydo-D-ribose 5-phosphate + D-glyceraldehyde 3-phosphate + L-glutamine = pyridoxal 5'-phosphate + L-glutamate + phosphate + 3 H2O + H(+). It carries out the reaction L-glutamine + H2O = L-glutamate + NH4(+). It participates in cofactor biosynthesis; pyridoxal 5'-phosphate biosynthesis. In terms of biological role, catalyzes the hydrolysis of glutamine to glutamate and ammonia as part of the biosynthesis of pyridoxal 5'-phosphate. The resulting ammonia molecule is channeled to the active site of PdxS. In Methanopyrus kandleri (strain AV19 / DSM 6324 / JCM 9639 / NBRC 100938), this protein is Pyridoxal 5'-phosphate synthase subunit PdxT.